A 119-amino-acid chain; its full sequence is Beta-2-microglobulin (119 aa).

A signal peptide spans methionine 1–alanine 20. The Ig-like C1-type domain occupies proline 25–threonine 114. A disulfide bridge connects residues cysteine 45 and cysteine 100.

This sequence belongs to the beta-2-microglobulin family. As to quaternary structure, heterodimer of an alpha chain and a beta chain. Beta-2-microglobulin is the beta-chain of major histocompatibility complex class I molecules.

Its subcellular location is the secreted. In terms of biological role, component of the class I major histocompatibility complex (MHC). Involved in the presentation of peptide antigens to the immune system. The protein is Beta-2-microglobulin (B2M) of Cricetulus griseus (Chinese hamster).